We begin with the raw amino-acid sequence, 157 residues long: Class 10 plant pathogenesis-related protein 2F (157 aa).

Position 8 (Asp8) interacts with trans-zeatin. The Ca(2+) site is built by Pro32, Val35, and Ile38. The trans-zeatin site is built by Glu60, His69, Tyr81, and Tyr83.

Belongs to the BetVI family.

Its subcellular location is the cytoplasm. The protein localises to the cytosol. Class II ribonuclease (RNase). Binds to cytokinins. Interacts with melatonin. This Lupinus luteus (European yellow lupine) protein is Class 10 plant pathogenesis-related protein 2F.